We begin with the raw amino-acid sequence, 188 residues long: Elongation factor P (188 aa).

This sequence belongs to the elongation factor P family.

The protein localises to the cytoplasm. The protein operates within protein biosynthesis; polypeptide chain elongation. Involved in peptide bond synthesis. Stimulates efficient translation and peptide-bond synthesis on native or reconstituted 70S ribosomes in vitro. Probably functions indirectly by altering the affinity of the ribosome for aminoacyl-tRNA, thus increasing their reactivity as acceptors for peptidyl transferase. This Mycoplasma mobile (strain ATCC 43663 / 163K / NCTC 11711) (Mesomycoplasma mobile) protein is Elongation factor P.